We begin with the raw amino-acid sequence, 255 residues long: MPRYALRIEYDGGPFAGWQRQAAQASVQGAIETALGRLEPGPHTIAAAGRTDTGVHATGQVAHCDLVREWDPFRLAGALNAHLKPLPVAIVAAARVPEEFHARFSAVERRYLFRLLARRAPEVHDRGRVWRVPHPLDPEAMRAGAAHLVGRHDFTTFRAAGCQAASPVKTLDALTLETVEGMNGTEYRFHLRARSFLHNQVRSIVGTLERVGAGAWTPDQVREALEAHDRAACGPVCPPQGLYLTGVGYPADPFA.

Asp52 functions as the Nucleophile in the catalytic mechanism. Tyr111 provides a ligand contact to substrate.

This sequence belongs to the tRNA pseudouridine synthase TruA family. Homodimer.

It carries out the reaction uridine(38/39/40) in tRNA = pseudouridine(38/39/40) in tRNA. In terms of biological role, formation of pseudouridine at positions 38, 39 and 40 in the anticodon stem and loop of transfer RNAs. The chain is tRNA pseudouridine synthase A from Cereibacter sphaeroides (strain ATCC 17029 / ATH 2.4.9) (Rhodobacter sphaeroides).